We begin with the raw amino-acid sequence, 954 residues long: Glycine dehydrogenase (decarboxylating) (954 aa).

Lys701 bears the N6-(pyridoxal phosphate)lysine mark.

It belongs to the GcvP family. As to quaternary structure, the glycine cleavage system is composed of four proteins: P, T, L and H. Pyridoxal 5'-phosphate is required as a cofactor.

The enzyme catalyses N(6)-[(R)-lipoyl]-L-lysyl-[glycine-cleavage complex H protein] + glycine + H(+) = N(6)-[(R)-S(8)-aminomethyldihydrolipoyl]-L-lysyl-[glycine-cleavage complex H protein] + CO2. Functionally, the glycine cleavage system catalyzes the degradation of glycine. The P protein binds the alpha-amino group of glycine through its pyridoxal phosphate cofactor; CO(2) is released and the remaining methylamine moiety is then transferred to the lipoamide cofactor of the H protein. This Bordetella pertussis (strain Tohama I / ATCC BAA-589 / NCTC 13251) protein is Glycine dehydrogenase (decarboxylating).